The sequence spans 154 residues: Myoglobin (154 aa).

In terms of domain architecture, Globin spans 2 to 148 (GLSDGEWQLV…FRKDIAAKYK (147 aa)). Position 4 is a phosphoserine (serine 4). Histidine 65 provides a ligand contact to nitrite. An O2-binding site is contributed by histidine 65. Threonine 68 carries the phosphothreonine modification. A heme b-binding site is contributed by histidine 94.

The protein belongs to the globin family. As to quaternary structure, monomeric.

It is found in the cytoplasm. The protein resides in the sarcoplasm. It carries out the reaction Fe(III)-heme b-[protein] + nitric oxide + H2O = Fe(II)-heme b-[protein] + nitrite + 2 H(+). The catalysed reaction is H2O2 + AH2 = A + 2 H2O. Functionally, monomeric heme protein which primary function is to store oxygen and facilitate its diffusion within muscle tissues. Reversibly binds oxygen through a pentacoordinated heme iron and enables its timely and efficient release as needed during periods of heightened demand. Depending on the oxidative conditions of tissues and cells, and in addition to its ability to bind oxygen, it also has a nitrite reductase activity whereby it regulates the production of bioactive nitric oxide. Under stress conditions, like hypoxia and anoxia, it also protects cells against reactive oxygen species thanks to its pseudoperoxidase activity. In Delphinus delphis (Short-beaked common dolphin), this protein is Myoglobin (MB).